Reading from the N-terminus, the 291-residue chain is Methyl-CpG-binding domain protein 3 (291 aa).

The MBD domain occupies 1 to 72 (MERKRWECPA…DFRTGKMLMS (72 aa)). The tract at residues 1–80 (MERKRWECPA…MSKMNKSRQR (80 aa)) is required for interaction with MBD2. Ser-56 bears the Phosphoserine mark. Residues 60–80 (STFDFRTGKMLMSKMNKSRQR) are required for interaction with MBD3L2. Residue Lys-73 forms a Glycyl lysine isopeptide (Lys-Gly) (interchain with G-Cter in SUMO2) linkage. Ser-85 is modified (phosphoserine). Residues Lys-90 and Lys-92 each participate in a glycyl lysine isopeptide (Lys-Gly) (interchain with G-Cter in SUMO2) cross-link. Ser-144 carries the post-translational modification Phosphoserine. The stretch at 216–245 (KAFMVTDEDIRKQEELVQQVRKRLEEALMA) forms a coiled coil. Over residues 254–267 (LARDGEAPLDKACA) the composition is skewed to basic and acidic residues. The tract at residues 254–291 (LARDGEAPLDKACAEDDDEEDEEEEEEEPDPDPEMEHV) is disordered. Residues 268 to 291 (EDDDEEDEEEEEEEPDPDPEMEHV) show a composition bias toward acidic residues.

Heterodimer (via N-terminus) with MBD2. Component of the MeCP1 histone deacetylase complex. Component of the nucleosome remodeling and deacetylase (NuRD) repressor complex, composed of core proteins MTA1, MTA2, MTA3, RBBP4, RBBP7, HDAC1, HDAC2, MBD2, MBD3, and peripherally associated proteins CDK2AP1, CDK2AP2, GATAD2A, GATAD2B, CHD3, CHD4 and CHD5. The exact stoichiometry of the NuRD complex is unknown, and some subunits such as MBD2 and MBD3, GATAD2A and GATAD2B, and CHD3, CHD4 and CHD5 define mutually exclusive NuRD complexes. Interacts with MBD3L2 (via N-terminus); the interaction is direct. Interacts with BCL6. Interacts with CDK2AP1. Interacts with HDAC1. Interacts with MTA2. Interacts with DNMT1. Interacts with GATAD2A. Interacts with GATAD2B. Does not interact with PWWP2A. Does not interact with PWWP2B.

The protein resides in the nucleus. The protein localises to the chromosome. In terms of biological role, acts as a component of the histone deacetylase NuRD complex which participates in the remodeling of chromatin. Acts as transcriptional repressor and plays a role in gene silencing. Does not bind to methylated DNA by itself. Binds to a lesser degree DNA containing unmethylated CpG dinucleotides. Recruits histone deacetylases and DNA methyltransferases. The polypeptide is Methyl-CpG-binding domain protein 3 (MBD3) (Homo sapiens (Human)).